The sequence spans 148 residues: Leghemoglobin 29 (148 aa).

In terms of domain architecture, Globin spans 2 to 148 (EFTLRQEALV…LAVAIMKEMS (147 aa)). Nitrated tyrosine is present on Tyr-30. Ser-45 contacts heme b. The residue at position 45 (Ser-45) is a Phosphoserine. Position 63 (His-63) interacts with O2. His-95 and Lys-98 together coordinate heme b. A Nitrated tyrosine modification is found at Tyr-136.

Belongs to the plant globin family. As to quaternary structure, monomer. Post-translationally, nitrated in effective nodules and particularly in hypoxic conditions; this mechanism may play a protective role in the symbiosis by buffering toxic peroxynitrite NO(2)(-). Nitration level decrease during nodule senescence. Phosphorylation at Ser-45 disrupts the molecular environment of its porphyrin ring oxygen binding pocket, thus leading to a reduced oxygen consumption and to the delivery of oxygen O(2) to symbiosomes. In terms of tissue distribution, accumulates in root nodules after inoculation by bacteria of the genus Rhizobium. Expressed in mycorrhizal roots in the presence of the mycorrhizal fungus Glomus fasciculatum.

Its subcellular location is the cytoplasm. The protein resides in the cytosol. It localises to the nucleus. Leghemoglobin that reversibly binds oxygen O(2) through a pentacoordinated heme iron. In root nodules, facilitates the diffusion of oxygen to the bacteroids while preventing the bacterial nitrogenase from being inactivated by buffering dioxygen, nitric oxide and carbon monoxide, and promoting the formation of reactive oxygen species (ROS, e.g. H(2)O(2)). This role is essential for symbiotic nitrogen fixation (SNF). This Vicia faba (Broad bean) protein is Leghemoglobin 29.